A 304-amino-acid chain; its full sequence is Acetyl-coenzyme A carboxylase carboxyl transferase subunit beta (304 aa).

One can recognise a CoA carboxyltransferase N-terminal domain in the interval 25–294 (LWIKCPETGE…EAARRESGSQ (270 aa)).

Belongs to the AccD/PCCB family. As to quaternary structure, acetyl-CoA carboxylase is a heterohexamer composed of biotin carboxyl carrier protein (AccB), biotin carboxylase (AccC) and two subunits each of ACCase subunit alpha (AccA) and ACCase subunit beta (AccD).

It is found in the cytoplasm. It catalyses the reaction N(6)-carboxybiotinyl-L-lysyl-[protein] + acetyl-CoA = N(6)-biotinyl-L-lysyl-[protein] + malonyl-CoA. It functions in the pathway lipid metabolism; malonyl-CoA biosynthesis; malonyl-CoA from acetyl-CoA: step 1/1. Component of the acetyl coenzyme A carboxylase (ACC) complex. Biotin carboxylase (BC) catalyzes the carboxylation of biotin on its carrier protein (BCCP) and then the CO(2) group is transferred by the transcarboxylase to acetyl-CoA to form malonyl-CoA. The sequence is that of Acetyl-coenzyme A carboxylase carboxyl transferase subunit beta from Sinorhizobium fredii (strain NBRC 101917 / NGR234).